We begin with the raw amino-acid sequence, 304 residues long: D-alanine--D-alanine ligase (304 aa).

In terms of domain architecture, ATP-grasp spans 103–299 (KLIWQALGLP…FADLCIEILK (197 aa)). 129 to 184 (EEKLGLPMFVKPAAEGSSVGVVKVKGKGRLKSVYEELKHLQGEIIAERFIGGGEYS) is a binding site for ATP. Mg(2+) contacts are provided by Asp-253, Glu-266, and Asn-268.

The protein belongs to the D-alanine--D-alanine ligase family. Requires Mg(2+) as cofactor. The cofactor is Mn(2+).

The protein localises to the cytoplasm. It catalyses the reaction 2 D-alanine + ATP = D-alanyl-D-alanine + ADP + phosphate + H(+). It functions in the pathway cell wall biogenesis; peptidoglycan biosynthesis. Functionally, cell wall formation. In Neisseria meningitidis serogroup B (strain ATCC BAA-335 / MC58), this protein is D-alanine--D-alanine ligase.